The chain runs to 223 residues: Urease accessory protein UreF (223 aa).

The protein belongs to the UreF family. As to quaternary structure, ureD, UreF and UreG form a complex that acts as a GTP-hydrolysis-dependent molecular chaperone, activating the urease apoprotein by helping to assemble the nickel containing metallocenter of UreC. The UreE protein probably delivers the nickel.

Its subcellular location is the cytoplasm. In terms of biological role, required for maturation of urease via the functional incorporation of the urease nickel metallocenter. This chain is Urease accessory protein UreF, found in Paenarthrobacter aurescens (strain TC1).